Consider the following 530-residue polypeptide: Chaperone Ric-8A (530 aa).

S435 is subject to Phosphoserine; by CK2. At T440 the chain carries Phosphothreonine; by CK2. T442 carries the phosphothreonine modification. A phosphoserine mark is found at S501, S522, S523, and S527.

The protein belongs to the synembryn family. As to quaternary structure, interacts with GDP-bound G alpha proteins GNAI1, GNAO1 and GNAQ, and with GNA13 with lower affinity. Does not interact with G-alpha proteins when they are in complex with subunits beta and gamma. Interacts (via C-terminus) with RGS14; the interaction stimulates the dissociation of the complex between RGS14 and the active GTP-bound form of GNAI1. Interacts with NCS1; interaction is favored in the absence of Ca(2+) and myristoylation of NCS1 is not required. Phosphorylated at Ser-435 and Thr-440 by CK2, stabilizing its interface with G alpha proteins.

It is found in the cytoplasm. The protein resides in the cell cortex. Its function is as follows. Chaperone that specifically binds and folds nascent G alpha proteins prior to G protein heterotrimer formation, promoting their stability and activity: folds GNAI1, GNAO1, GNA13 and GNAQ. Does not fold G(s) G-alpha proteins GNAS nor GNAL. Also acts as a guanine nucleotide exchange factor (GEF) for G alpha proteins by stimulating exchange of bound GDP for free GTP. Involved in regulation of microtubule pulling forces during mitotic movement of chromosomes by stimulating G(i)-alpha protein (GNAI1), possibly leading to release G(i)-alpha-GTP and NuMA proteins from the NuMA-GPSM2-G(i)-alpha-GDP complex. Also acts as an activator for G(q)-alpha (GNAQ) protein by enhancing the G(q)-coupled receptor-mediated ERK activation. The polypeptide is Chaperone Ric-8A (Rattus norvegicus (Rat)).